A 366-amino-acid polypeptide reads, in one-letter code: UDP-N-acetylenolpyruvoylglucosamine reductase (366 aa).

The FAD-binding PCMH-type domain occupies 29–203 (VGPVARTLVT…LEVEFALDAS (175 aa)). R177 is an active-site residue. Residue S258 is the Proton donor of the active site. The active site involves E358.

Belongs to the MurB family. It depends on FAD as a cofactor.

The protein localises to the cytoplasm. The catalysed reaction is UDP-N-acetyl-alpha-D-muramate + NADP(+) = UDP-N-acetyl-3-O-(1-carboxyvinyl)-alpha-D-glucosamine + NADPH + H(+). The protein operates within cell wall biogenesis; peptidoglycan biosynthesis. Functionally, cell wall formation. The chain is UDP-N-acetylenolpyruvoylglucosamine reductase from Mycobacterium ulcerans (strain Agy99).